The primary structure comprises 418 residues: STE20-related kinase adapter protein beta (418 aa).

The region spanning 58-369 (YELQVEIGRG…ASSLLSHVFF (312 aa)) is the Protein kinase domain. ATP contacts are provided by residues 64 to 72 (IGRGFDNLT) and Lys89.

It belongs to the protein kinase superfamily. STE Ser/Thr protein kinase family. STE20 subfamily. In terms of assembly, component of a trimeric complex composed of STK11/LKB1, STRAD (STRADA or STRADB) and CAB39/MO25 (CAB39/MO25alpha or CAB39L/MO25beta): the complex tethers STK11/LKB1 in the cytoplasm and stimulates its catalytic activity. Interacts with BIRC4/XIAP. These two proteins are likely to coexist in a complex with TAK1, TRAF6, TAB1 and TAB2. As to expression, highly expressed in heart, skeletal muscle, testis, liver and colon.

It is found in the nucleus. It localises to the cytoplasm. Pseudokinase which, in complex with CAB39/MO25 (CAB39/MO25alpha or CAB39L/MO25beta), binds to and activates STK11/LKB1. Adopts a closed conformation typical of active protein kinases and binds STK11/LKB1 as a pseudosubstrate, promoting conformational change of STK11/LKB1 in an active conformation. The polypeptide is STE20-related kinase adapter protein beta (STRADB) (Homo sapiens (Human)).